The sequence spans 219 residues: uncharacterized protein (219 aa).

In terms of domain architecture, HD spans 57–158 (QLEHMTRAAM…LSEASRQTLL (102 aa)).

This is an uncharacterized protein from Acanthamoeba polyphaga mimivirus (APMV).